The following is a 302-amino-acid chain: Acetaldehyde dehydrogenase 2 (302 aa).

Cys-130 (acyl-thioester intermediate) is an active-site residue. NAD(+) is bound by residues 161-169 (SVGPGTRRN) and Asn-272.

This sequence belongs to the acetaldehyde dehydrogenase family.

The catalysed reaction is acetaldehyde + NAD(+) + CoA = acetyl-CoA + NADH + H(+). The sequence is that of Acetaldehyde dehydrogenase 2 from Cupriavidus necator (strain ATCC 17699 / DSM 428 / KCTC 22496 / NCIMB 10442 / H16 / Stanier 337) (Ralstonia eutropha).